A 357-amino-acid polypeptide reads, in one-letter code: Phosphoribosylformylglycinamidine cyclo-ligase (357 aa).

Belongs to the AIR synthase family.

The protein resides in the cytoplasm. It catalyses the reaction 2-formamido-N(1)-(5-O-phospho-beta-D-ribosyl)acetamidine + ATP = 5-amino-1-(5-phospho-beta-D-ribosyl)imidazole + ADP + phosphate + H(+). It participates in purine metabolism; IMP biosynthesis via de novo pathway; 5-amino-1-(5-phospho-D-ribosyl)imidazole from N(2)-formyl-N(1)-(5-phospho-D-ribosyl)glycinamide: step 2/2. The polypeptide is Phosphoribosylformylglycinamidine cyclo-ligase (Allorhizobium ampelinum (strain ATCC BAA-846 / DSM 112012 / S4) (Agrobacterium vitis (strain S4))).